Reading from the N-terminus, the 124-residue chain is Acidic phospholipase A2 BA1 (124 aa).

Disulfide bonds link C26-C116, C28-C44, C43-C95, C49-C124, C50-C88, C57-C81, and C75-C86. Residues Y27, G29, and G31 each contribute to the Ca(2+) site. The active site involves H47. D48 provides a ligand contact to Ca(2+). Residue D89 is part of the active site.

It belongs to the phospholipase A2 family. Group II subfamily. D49 sub-subfamily. Ca(2+) is required as a cofactor. As to expression, expressed by the venom gland.

Its subcellular location is the secreted. It catalyses the reaction a 1,2-diacyl-sn-glycero-3-phosphocholine + H2O = a 1-acyl-sn-glycero-3-phosphocholine + a fatty acid + H(+). Functionally, PLA2 catalyzes the calcium-dependent hydrolysis of the 2-acyl groups in 3-sn-phosphoglycerides. The polypeptide is Acidic phospholipase A2 BA1 (Gloydius halys (Chinese water mocassin)).